A 505-amino-acid chain; its full sequence is RNA-splicing ligase RtcB homolog (505 aa).

Asp-119, Cys-122, His-227, His-259, and His-353 together coordinate Mn(2+). 226–230 provides a ligand contact to GMP; the sequence is NHYGE. Residues 353 to 354, 402 to 405, Ser-409, 428 to 431, and Lys-504 each bind GMP; these read HN, GGTM, and HGAG. Residue His-428 is the GMP-histidine intermediate of the active site.

This sequence belongs to the RtcB family. In terms of assembly, catalytic component of the tRNA-splicing ligase complex. Requires Mn(2+) as cofactor.

The enzyme catalyses a 3'-end 3'-phospho-ribonucleotide-RNA + a 5'-end dephospho-ribonucleoside-RNA + GTP = a ribonucleotidyl-ribonucleotide-RNA + GMP + diphosphate. It carries out the reaction a 3'-end 2',3'-cyclophospho-ribonucleotide-RNA + a 5'-end dephospho-ribonucleoside-RNA + GTP + H2O = a ribonucleotidyl-ribonucleotide-RNA + GMP + diphosphate + H(+). Functionally, catalytic subunit of the tRNA-splicing ligase complex that acts by directly joining spliced tRNA halves to mature-sized tRNAs by incorporating the precursor-derived splice junction phosphate into the mature tRNA as a canonical 3',5'-phosphodiester. May act as an RNA ligase with broad substrate specificity, and may function toward other RNAs. The sequence is that of RNA-splicing ligase RtcB homolog from Brugia malayi (Filarial nematode worm).